The primary structure comprises 227 residues: MAYPMQLGFQDATSPIMEELLHFHDHTLMIVFLISSLVLYIISLMLTTKLTHTSTMDAQEVETIWTILPAIILILIALPSLRILYMMDEINNPSLTVKTMGHQWYWSYEYTDYEDLSFDSYMVPTSELKPGELRLLEVDNRVVLPMEMTIRMLVSSEDVLHSWAVPSLGLKTDAIPGRLNQTTLMSTRPGLYYGQCSEICGSNHSFMPIVLEMVPLKYFEKWSASML.

The Mitochondrial intermembrane portion of the chain corresponds to 1–14 (MAYPMQLGFQDATS). Residues 15-45 (PIMEELLHFHDHTLMIVFLISSLVLYIISLM) form a helical membrane-spanning segment. The Mitochondrial matrix segment spans residues 46–59 (LTTKLTHTSTMDAQ). Residues 60–87 (EVETIWTILPAIILILIALPSLRILYMM) traverse the membrane as a helical segment. At 88–227 (DEINNPSLTV…YFEKWSASML (140 aa)) the chain is on the mitochondrial intermembrane side. 6 residues coordinate Cu cation: His-161, Cys-196, Glu-198, Cys-200, His-204, and Met-207. Glu-198 lines the Mg(2+) pocket. Tyr-218 carries the post-translational modification Phosphotyrosine.

The protein belongs to the cytochrome c oxidase subunit 2 family. In terms of assembly, component of the cytochrome c oxidase (complex IV, CIV), a multisubunit enzyme composed of 14 subunits. The complex is composed of a catalytic core of 3 subunits MT-CO1, MT-CO2 and MT-CO3, encoded in the mitochondrial DNA, and 11 supernumerary subunits COX4I, COX5A, COX5B, COX6A, COX6B, COX6C, COX7A, COX7B, COX7C, COX8 and NDUFA4, which are encoded in the nuclear genome. The complex exists as a monomer or a dimer and forms supercomplexes (SCs) in the inner mitochondrial membrane with NADH-ubiquinone oxidoreductase (complex I, CI) and ubiquinol-cytochrome c oxidoreductase (cytochrome b-c1 complex, complex III, CIII), resulting in different assemblies (supercomplex SCI(1)III(2)IV(1) and megacomplex MCI(2)III(2)IV(2)). Found in a complex with TMEM177, COA6, COX18, COX20, SCO1 and SCO2. Interacts with TMEM177 in a COX20-dependent manner. Interacts with COX20. Interacts with COX16. It depends on Cu cation as a cofactor.

The protein resides in the mitochondrion inner membrane. It catalyses the reaction 4 Fe(II)-[cytochrome c] + O2 + 8 H(+)(in) = 4 Fe(III)-[cytochrome c] + 2 H2O + 4 H(+)(out). Functionally, component of the cytochrome c oxidase, the last enzyme in the mitochondrial electron transport chain which drives oxidative phosphorylation. The respiratory chain contains 3 multisubunit complexes succinate dehydrogenase (complex II, CII), ubiquinol-cytochrome c oxidoreductase (cytochrome b-c1 complex, complex III, CIII) and cytochrome c oxidase (complex IV, CIV), that cooperate to transfer electrons derived from NADH and succinate to molecular oxygen, creating an electrochemical gradient over the inner membrane that drives transmembrane transport and the ATP synthase. Cytochrome c oxidase is the component of the respiratory chain that catalyzes the reduction of oxygen to water. Electrons originating from reduced cytochrome c in the intermembrane space (IMS) are transferred via the dinuclear copper A center (CU(A)) of subunit 2 and heme A of subunit 1 to the active site in subunit 1, a binuclear center (BNC) formed by heme A3 and copper B (CU(B)). The BNC reduces molecular oxygen to 2 water molecules using 4 electrons from cytochrome c in the IMS and 4 protons from the mitochondrial matrix. The polypeptide is Cytochrome c oxidase subunit 2 (MT-CO2) (Syncerus caffer (African buffalo)).